The following is a 260-amino-acid chain: Hydroxyethylthiazole kinase (260 aa).

Methionine 38 contacts substrate. ATP is bound by residues lysine 114 and serine 161. Residue glycine 188 participates in substrate binding.

This sequence belongs to the Thz kinase family. The cofactor is Mg(2+).

The catalysed reaction is 5-(2-hydroxyethyl)-4-methylthiazole + ATP = 4-methyl-5-(2-phosphooxyethyl)-thiazole + ADP + H(+). It participates in cofactor biosynthesis; thiamine diphosphate biosynthesis; 4-methyl-5-(2-phosphoethyl)-thiazole from 5-(2-hydroxyethyl)-4-methylthiazole: step 1/1. Catalyzes the phosphorylation of the hydroxyl group of 4-methyl-5-beta-hydroxyethylthiazole (THZ). This Campylobacter lari (strain RM2100 / D67 / ATCC BAA-1060) protein is Hydroxyethylthiazole kinase.